The chain runs to 122 residues: Large ribosomal subunit protein uL14c (122 aa).

The protein belongs to the universal ribosomal protein uL14 family. Part of the 50S ribosomal subunit.

The protein resides in the plastid. Its subcellular location is the cyanelle. Its function is as follows. Binds to 23S rRNA. In Cyanophora paradoxa, this protein is Large ribosomal subunit protein uL14c.